A 334-amino-acid chain; its full sequence is Fructose-1,6-bisphosphatase class 1 (334 aa).

Glu90, Asp113, Leu115, and Asp116 together coordinate Mg(2+). Substrate contacts are provided by residues 116–119 (DGSS), Asn209, Tyr242, and Lys272. Glu278 contacts Mg(2+).

The protein belongs to the FBPase class 1 family. Homotetramer. Mg(2+) is required as a cofactor.

Its subcellular location is the cytoplasm. The enzyme catalyses beta-D-fructose 1,6-bisphosphate + H2O = beta-D-fructose 6-phosphate + phosphate. The protein operates within carbohydrate biosynthesis; gluconeogenesis. In Actinobacillus succinogenes (strain ATCC 55618 / DSM 22257 / CCUG 43843 / 130Z), this protein is Fructose-1,6-bisphosphatase class 1.